The following is a 270-amino-acid chain: B3 domain-containing protein Os03g0212300 (270 aa).

DNA-binding regions (TF-B3) lie at residues 13-110 (FEFF…FDET) and 158-265 (VTLR…RKAD).

The protein resides in the nucleus. This Oryza sativa subsp. japonica (Rice) protein is B3 domain-containing protein Os03g0212300.